The sequence spans 441 residues: MEPRDNQAEASYTFGDRSSSDIVVRLRNEEGRDDWIYCHSKILSEKSQYFADRLSDKWPTCKILDSRYCVEVICQESDYDHHINLLRLLYVVSDDVHEDNLCHNVKSALGILSVAKELSCPQIVTACVNYLEAVPWEEGEEEEILRIVPRIGSEAEPILARLQPVDQSAVLEIFVSAFRFATSSPPLLLGDIKSSAQEQIEYMITEDDDAPLLIADEEVKLEVKQCVKSLFVRFFQCLEEITLKPVESEVINKKGSFRMVLSDMCWVFQILTKMEVVRDFVITWADISEKLVKVVEQLETTVVEAVEIRVKVIEVTAKVIEAIGYGTVILPTAKRLQMVKLWLPFVRNTKPLVDSPVREDEENDTVRYKIDGEIWQALESSFVSIILALPSADQAEILTEWLSKNGLYPDLTEAFEVWCYRSKVAKRRLGLVGGEEENGMS.

The BTB domain maps to 20–98 (SDIVVRLRNE…LYVVSDDVHE (79 aa)).

It participates in protein modification; protein ubiquitination. Its function is as follows. May act as a substrate-specific adapter of an E3 ubiquitin-protein ligase complex (CUL3-RBX1-BTB) which mediates the ubiquitination and subsequent proteasomal degradation of target proteins. The protein is BTB/POZ domain-containing protein At3g05675 of Arabidopsis thaliana (Mouse-ear cress).